A 282-amino-acid chain; its full sequence is Phosphate import ATP-binding protein PstB (282 aa).

The ABC transporter domain occupies 36-277; that stretch reads IEVKNLNFFY…PARKETEDYI (242 aa). 68–75 is an ATP binding site; it reads GPSGCGKS.

This sequence belongs to the ABC transporter superfamily. Phosphate importer (TC 3.A.1.7) family. In terms of assembly, the complex is composed of two ATP-binding proteins (PstB), two transmembrane proteins (PstC and PstA) and a solute-binding protein (PstS).

Its subcellular location is the cell inner membrane. It catalyses the reaction phosphate(out) + ATP + H2O = ADP + 2 phosphate(in) + H(+). Functionally, part of the ABC transporter complex PstSACB involved in phosphate import. Responsible for energy coupling to the transport system. This Burkholderia pseudomallei (strain 1710b) protein is Phosphate import ATP-binding protein PstB.